The following is a 636-amino-acid chain: Chaperone protein DnaK (636 aa).

Positions 579–636 are disordered; the sequence is ELYKNAAPPPGADGQQGADGQQGADGQQGADGQQGADGQQGADGQTTESSSNDETKTN. The segment covering 590–623 has biased composition (low complexity); that stretch reads ADGQQGADGQQGADGQQGADGQQGADGQQGADGQ.

The protein belongs to the heat shock protein 70 family.

Functionally, acts as a chaperone. This Nitrosopumilus maritimus (strain SCM1) protein is Chaperone protein DnaK.